Here is a 534-residue protein sequence, read N- to C-terminus: Coiled-coil domain-containing protein 183 (534 aa).

3 coiled-coil regions span residues 10–54 (EEQT…NIRR), 136–209 (DASK…DMKI), and 323–396 (LAQR…HSNM).

This is Coiled-coil domain-containing protein 183 (CCDC183) from Homo sapiens (Human).